The chain runs to 357 residues: UDP-N-acetylglucosamine--N-acetylmuramyl-(pentapeptide) pyrophosphoryl-undecaprenol N-acetylglucosamine transferase (357 aa).

UDP-N-acetyl-alpha-D-glucosamine contacts are provided by residues 13–15, asparagine 125, arginine 161, serine 189, isoleucine 243, and glutamine 288; that span reads TGG.

The protein belongs to the glycosyltransferase 28 family. MurG subfamily.

Its subcellular location is the cell inner membrane. The enzyme catalyses di-trans,octa-cis-undecaprenyl diphospho-N-acetyl-alpha-D-muramoyl-L-alanyl-D-glutamyl-meso-2,6-diaminopimeloyl-D-alanyl-D-alanine + UDP-N-acetyl-alpha-D-glucosamine = di-trans,octa-cis-undecaprenyl diphospho-[N-acetyl-alpha-D-glucosaminyl-(1-&gt;4)]-N-acetyl-alpha-D-muramoyl-L-alanyl-D-glutamyl-meso-2,6-diaminopimeloyl-D-alanyl-D-alanine + UDP + H(+). It functions in the pathway cell wall biogenesis; peptidoglycan biosynthesis. In terms of biological role, cell wall formation. Catalyzes the transfer of a GlcNAc subunit on undecaprenyl-pyrophosphoryl-MurNAc-pentapeptide (lipid intermediate I) to form undecaprenyl-pyrophosphoryl-MurNAc-(pentapeptide)GlcNAc (lipid intermediate II). The polypeptide is UDP-N-acetylglucosamine--N-acetylmuramyl-(pentapeptide) pyrophosphoryl-undecaprenol N-acetylglucosamine transferase (Polynucleobacter asymbioticus (strain DSM 18221 / CIP 109841 / QLW-P1DMWA-1) (Polynucleobacter necessarius subsp. asymbioticus)).